Reading from the N-terminus, the 98-residue chain is Alpha-elicitin hibernalin (98 aa).

3 cysteine pairs are disulfide-bonded: Cys3-Cys71, Cys27-Cys56, and Cys51-Cys95.

It is found in the secreted. Functionally, induces local and distal defense responses (incompatible hypersensitive reaction) in plants from the solanaceae and cruciferae families. Elicits leaf necrosis and causes the accumulation of pathogenesis-related proteins. Might interact with the lipidic molecules of the plasma membrane. The sequence is that of Alpha-elicitin hibernalin from Phytophthora hibernalis.